We begin with the raw amino-acid sequence, 139 residues long: uncharacterized protein (139 aa).

Helical transmembrane passes span 35-55 and 57-77; these read LVFLFVVFFSDCFFSITSFLI and FGILSSFLIFSLFCLGFLTVI.

The protein localises to the membrane. This is an uncharacterized protein from Saccharomyces cerevisiae (strain ATCC 204508 / S288c) (Baker's yeast).